Consider the following 293-residue polypeptide: NAD kinase (293 aa).

Catalysis depends on Asp72, which acts as the Proton acceptor. NAD(+) is bound by residues 72–73 (DG), 146–147 (ND), Arg157, Lys174, Asp176, 187–192 (TAYALS), and Gln247.

The protein belongs to the NAD kinase family. It depends on a divalent metal cation as a cofactor.

It localises to the cytoplasm. It catalyses the reaction NAD(+) + ATP = ADP + NADP(+) + H(+). Functionally, involved in the regulation of the intracellular balance of NAD and NADP, and is a key enzyme in the biosynthesis of NADP. Catalyzes specifically the phosphorylation on 2'-hydroxyl of the adenosine moiety of NAD to yield NADP. In Marinomonas sp. (strain MWYL1), this protein is NAD kinase.